Reading from the N-terminus, the 264-residue chain is Regulatory protein RecX (264 aa).

Belongs to the RecX family.

The protein resides in the cytoplasm. Its function is as follows. Modulates RecA activity. The protein is Regulatory protein RecX of Limosilactobacillus reuteri (strain DSM 20016) (Lactobacillus reuteri).